Consider the following 209-residue polypeptide: Redox-sensing transcriptional repressor Rex (209 aa).

Positions 16-55 (LYYRFIQNLSLSGKQRVSSAELSEAVKVDSATIRRDFSYF) form a DNA-binding region, H-T-H motif. 90 to 95 (GVGNLG) lines the NAD(+) pocket.

Belongs to the transcriptional regulatory Rex family. As to quaternary structure, homodimer.

It is found in the cytoplasm. Functionally, modulates transcription in response to changes in cellular NADH/NAD(+) redox state. This chain is Redox-sensing transcriptional repressor Rex, found in Bacillus cereus (strain ATCC 10987 / NRS 248).